The chain runs to 417 residues: Serine hydroxymethyltransferase (417 aa).

Residues L121 and 125–127 each bind (6S)-5,6,7,8-tetrahydrofolate; that span reads GHL. K229 is modified (N6-(pyridoxal phosphate)lysine). 355-357 contributes to the (6S)-5,6,7,8-tetrahydrofolate binding site; sequence SPF.

Belongs to the SHMT family. In terms of assembly, homodimer. It depends on pyridoxal 5'-phosphate as a cofactor.

The protein localises to the cytoplasm. The enzyme catalyses (6R)-5,10-methylene-5,6,7,8-tetrahydrofolate + glycine + H2O = (6S)-5,6,7,8-tetrahydrofolate + L-serine. It functions in the pathway one-carbon metabolism; tetrahydrofolate interconversion. Its pathway is amino-acid biosynthesis; glycine biosynthesis; glycine from L-serine: step 1/1. In terms of biological role, catalyzes the reversible interconversion of serine and glycine with tetrahydrofolate (THF) serving as the one-carbon carrier. This reaction serves as the major source of one-carbon groups required for the biosynthesis of purines, thymidylate, methionine, and other important biomolecules. Also exhibits THF-independent aldolase activity toward beta-hydroxyamino acids, producing glycine and aldehydes, via a retro-aldol mechanism. The chain is Serine hydroxymethyltransferase from Serratia proteamaculans (strain 568).